The primary structure comprises 366 residues: Chorismate synthase (366 aa).

The NADP(+) site is built by Arg-48 and Arg-54. FMN contacts are provided by residues 125-127 (RSS), 237-238 (NA), Gly-277, 292-296 (KPTSS), and Arg-318.

The protein belongs to the chorismate synthase family. As to quaternary structure, homotetramer. It depends on FMNH2 as a cofactor.

It carries out the reaction 5-O-(1-carboxyvinyl)-3-phosphoshikimate = chorismate + phosphate. It functions in the pathway metabolic intermediate biosynthesis; chorismate biosynthesis; chorismate from D-erythrose 4-phosphate and phosphoenolpyruvate: step 7/7. Functionally, catalyzes the anti-1,4-elimination of the C-3 phosphate and the C-6 proR hydrogen from 5-enolpyruvylshikimate-3-phosphate (EPSP) to yield chorismate, which is the branch point compound that serves as the starting substrate for the three terminal pathways of aromatic amino acid biosynthesis. This reaction introduces a second double bond into the aromatic ring system. This chain is Chorismate synthase, found in Acidovorax sp. (strain JS42).